We begin with the raw amino-acid sequence, 481 residues long: Cytochrome P450 monooygenase 2 (481 aa).

Residues 12 to 32 (GSQLLPFYIAIFVFTLVPWAI) form a helical membrane-spanning segment. Cys418 is a heme binding site.

The protein belongs to the cytochrome P450 family. Heme serves as cofactor.

Its subcellular location is the membrane. It functions in the pathway plant hormone biosynthesis; gibberellin biosynthesis. Gibberellin 20-oxidase; part of the gene cluster that mediates the biosynthesis of gibberellins (GAs), diterpenoids that may provide a selective advantage during infection of the preferred host plant, rice. Gibberellins (GAs) are diterpenoids and are synthesized via the mevalonate pathway. Biosynthesis of the major metabolite GA3 (gibberellic acid) from geranylgeranyl diphosphate (GGPP) requires 13 steps. The GGPP produced by the geranylgeranyl diphosphate synthase GGS2 is converted to ent-kaurene via ent-copalyldiphosphate in a two-step cyclization reaction performed by the bifunctional ent-copalyl diphosphate synthase/ent-kaurene synthase enzyme (CPS/KS). Ent-Kaurene is metabolized to GAs by a series of oxidation reactions catalyzed by cytochrome P450 monooxygenases. Cytochrome P450 monooxygenase P450-4 is an ent-kaurene oxidase that catalyzes the three oxidation steps between ent-kaurene and ent-kaurenoic acid. The highly multifunctional cytochrome P450 monooxygenase P450-1 then catalyzes four steps involving oxidation at two carbon atoms, in the main pathway from ent-kaurenoic acid to GA14 via GA12-aldehyde as well as producing kaurenolides and fujenoic acids as by-products. The cytochrome P450 monooxygenase P450-2 then converts GA14 to GA4 by removal of C-20. GA4 is further converted to GA7 by the GA4 desaturase DES via 1,2-desaturation before cytochrome P450 monooxygenase P450-3, a 13-hydroxylase, hydroxylates GA7 to GA3, the final product of the GA-biosynthetic pathway. In Gibberella fujikuroi (strain CBS 195.34 / IMI 58289 / NRRL A-6831) (Bakanae and foot rot disease fungus), this protein is Cytochrome P450 monooygenase 2.